The primary structure comprises 540 residues: 2-succinyl-5-enolpyruvyl-6-hydroxy-3-cyclohexene-1-carboxylate synthase (540 aa).

Belongs to the TPP enzyme family. MenD subfamily. As to quaternary structure, homodimer. Requires Mg(2+) as cofactor. Mn(2+) is required as a cofactor. The cofactor is thiamine diphosphate.

The catalysed reaction is isochorismate + 2-oxoglutarate + H(+) = 5-enolpyruvoyl-6-hydroxy-2-succinyl-cyclohex-3-ene-1-carboxylate + CO2. The protein operates within quinol/quinone metabolism; 1,4-dihydroxy-2-naphthoate biosynthesis; 1,4-dihydroxy-2-naphthoate from chorismate: step 2/7. It functions in the pathway quinol/quinone metabolism; menaquinone biosynthesis. Functionally, catalyzes the thiamine diphosphate-dependent decarboxylation of 2-oxoglutarate and the subsequent addition of the resulting succinic semialdehyde-thiamine pyrophosphate anion to isochorismate to yield 2-succinyl-5-enolpyruvyl-6-hydroxy-3-cyclohexene-1-carboxylate (SEPHCHC). This chain is 2-succinyl-5-enolpyruvyl-6-hydroxy-3-cyclohexene-1-carboxylate synthase, found in Mycobacteroides abscessus (strain ATCC 19977 / DSM 44196 / CCUG 20993 / CIP 104536 / JCM 13569 / NCTC 13031 / TMC 1543 / L948) (Mycobacterium abscessus).